Consider the following 355-residue polypeptide: Endonuclease III homolog (355 aa).

The Nuclear localization signal motif lies at 44–50 (PKKFRFQ). One can recognise a HhH domain in the interval 122–149 (FQGDIPDTVEDLMTLPGVGPKMGYLCMS). Lys-142 serves as the catalytic Nucleophile; for N-glycosylase activity. Residues Cys-210, Cys-217, Cys-220, and Cys-228 each contribute to the [4Fe-4S] cluster site. The Nuclear localization signal motif lies at 252 to 255 (KKRP). The interval 303–355 (KEPAADIDVDQKPPVAFHSTTKETRSLRRSKRVAKKSSQYFSQQSLQDIEDLV) is disordered. A compositionally biased stretch (polar residues) spans 338–349 (KSSQYFSQQSLQ).

It belongs to the Nth/MutY family. Requires [4Fe-4S] cluster as cofactor.

The protein localises to the nucleus. The protein resides in the mitochondrion. The catalysed reaction is 2'-deoxyribonucleotide-(2'-deoxyribose 5'-phosphate)-2'-deoxyribonucleotide-DNA = a 3'-end 2'-deoxyribonucleotide-(2,3-dehydro-2,3-deoxyribose 5'-phosphate)-DNA + a 5'-end 5'-phospho-2'-deoxyribonucleoside-DNA + H(+). Bifunctional DNA N-glycosylase with associated apurinic/apyrimidinic (AP) lyase function that catalyzes the first step in base excision repair (BER), the primary repair pathway for the repair of oxidative DNA damage. The DNA N-glycosylase activity releases the damaged DNA base from DNA by cleaving the N-glycosidic bond, leaving an AP site. The AP-lyase activity cleaves the phosphodiester bond 3' to the AP site by a beta-elimination. Primarily recognizes and repairs oxidative base damage of pyrimidines. Also has 8-oxo-7,8-dihydroguanine (8-oxoG) DNA glycosylase activity. Also involved in the repair of 7-methylguanine lesions, although it cannot directly repair alkylated DNA bases. Probably does so via excision of methylformamidopyrimidine (mFapy) lesions, a spontaneous processing product of 7-methylguanine. The protein is Endonuclease III homolog (nth1) of Schizosaccharomyces pombe (strain 972 / ATCC 24843) (Fission yeast).